A 251-amino-acid chain; its full sequence is POU class 2 homeobox associating factor 3 (251 aa).

Residues 5–27 (PKVYQGVRVKITVKELLQQRRAH) form the OCA domain. Residues 24 to 45 (RRAHQAASGGTRSGGSSVHLSD) form a disordered region. Low complexity predominate over residues 31-40 (SGGTRSGGSS).

The protein belongs to the POU2AF family. In terms of assembly, interacts with POU2F3 in a DNA-dependent manner; this interaction increases POU2F3 transactivation activity. In terms of tissue distribution, expressed in many cell types of epithelial, mesenchymal and hematopoietic origins. Expressed in tufs cells.

It is found in the cytoplasm. The protein resides in the nucleus. In terms of biological role, transcriptional coactivator that specifically associates with POU2F3. This complex drives the development of tuft cells, a rare a rare chemosensory cells that coordinate immune and neural functions within mucosal epithelial tissues. The chain is POU class 2 homeobox associating factor 3 from Homo sapiens (Human).